The primary structure comprises 469 residues: Glutamate--tRNA ligase (469 aa).

Residues 9–19 carry the 'HIGH' region motif; it reads PSPTGMFHVGG. Zn(2+) contacts are provided by C100, C102, C122, and D124. The 'KMSKS' region signature appears at 232–236; it reads KLSKR. Position 235 (K235) interacts with ATP.

This sequence belongs to the class-I aminoacyl-tRNA synthetase family. Glutamate--tRNA ligase type 1 subfamily. Monomer. Zn(2+) is required as a cofactor.

Its subcellular location is the cytoplasm. The enzyme catalyses tRNA(Glu) + L-glutamate + ATP = L-glutamyl-tRNA(Glu) + AMP + diphosphate. Functionally, catalyzes the attachment of glutamate to tRNA(Glu) in a two-step reaction: glutamate is first activated by ATP to form Glu-AMP and then transferred to the acceptor end of tRNA(Glu). The polypeptide is Glutamate--tRNA ligase (Salinispora arenicola (strain CNS-205)).